The primary structure comprises 246 residues: High mobility group protein 1 (246 aa).

Positions 106 to 179 (PKKPLTVFFA…NYQREKSKYL (74 aa)) form a DNA-binding region, HMG box. The tract at residues 179–246 (LEAKKNGTLP…KKKDKSNSSI (68 aa)) is disordered. Residues 214–227 (PVEKRPHDDDGSSE) show a composition bias toward basic and acidic residues. Over residues 228–238 (KKKKKKKKDKK) the composition is skewed to basic residues.

Interacts with FPR1. Interacts with an unidentified DNA helicase. Associates with rDNA.

The protein resides in the nucleus. It localises to the nucleolus. Its function is as follows. DNA-binding protein that is probably part of the rDNA transcription apparatus. Acts synergetically with the RPA49 subunit of RNA polymerase I during rDNA transcription. May participate in mutagenesis control. This Saccharomyces cerevisiae (strain ATCC 204508 / S288c) (Baker's yeast) protein is High mobility group protein 1 (HMO1).